We begin with the raw amino-acid sequence, 106 residues long: Large ribosomal subunit protein P1 (106 aa).

The segment at 69–106 is disordered; that stretch reads AAAAAPAEEAKEEAKEEEEEEEEVKEEEAIEGLGALFG. The span at 83 to 98 shows a compositional bias: acidic residues; that stretch reads KEEEEEEEEVKEEEAI.

It belongs to the eukaryotic ribosomal protein P1/P2 family. As to quaternary structure, part of the 50S ribosomal subunit. Homodimer, it forms part of the ribosomal stalk which helps the ribosome interact with GTP-bound translation factors. Forms a heptameric uL10/P0(P1)2(P1)2(P1)2 complex, where uL10/P0 forms an elongated spine to which the P1 dimers bind in a sequential fashion.

Its function is as follows. Forms part of the ribosomal stalk, playing a central role in the interaction of the ribosome with GTP-bound translation factors. This is Large ribosomal subunit protein P1 from Archaeoglobus fulgidus (strain ATCC 49558 / DSM 4304 / JCM 9628 / NBRC 100126 / VC-16).